The chain runs to 446 residues: uncharacterized protein (446 aa).

Disordered stretches follow at residues 198–233, 309–337, and 394–431; these read SIQKQIPKQTQEQTQKQTQEQTQESSQNPHNEENYS, NEDNKNNMDNEEDSDESDIESDSDLDDSK, and SESVKSDSNESKSIKPESIKSESIKSDNSNNHKNFGNT. Positions 199–224 are enriched in low complexity; it reads IQKQIPKQTQEQTQKQTQEQTQESSQ. The span at 317–333 shows a compositional bias: acidic residues; that stretch reads DNEEDSDESDIESDSDL. The span at 397-418 shows a compositional bias: basic and acidic residues; the sequence is VKSDSNESKSIKPESIKSESIK.

This is an uncharacterized protein from Acanthamoeba polyphaga mimivirus (APMV).